A 2655-amino-acid polypeptide reads, in one-letter code: Probable polyketide synthase 42 (2655 aa).

A Ketosynthase family 3 (KS3) domain is found at 16–445; it reads QNGVAVIGVG…GSNCCIILSE (430 aa). Residues Cys-186, His-325, and His-368 each act as for beta-ketoacyl synthase activity in the active site. Residues 634-667 are acyl/malonyl transferase; that stretch reads GIKSDIMVGHSFGEIACSYCSGMVDFKTLCYLTY. Ser-644 (for acyl/malonyl transferase activity) is an active-site residue. The interval 926–1059 is N-terminal hotdog fold; sequence HPTWKKANKN…ANYSLFKHND (134 aa). The 309-residue stretch at 926-1234 folds into the PKS/mFAS DH domain; that stretch reads HPTWKKANKN…CKSSIPIIDS (309 aa). The active-site Proton acceptor; for dehydratase activity is His-970. The C-terminal hotdog fold stretch occupies residues 1074 to 1234; that stretch reads NYTIISKDEL…CKSSIPIIDS (161 aa). The active-site Proton donor; for dehydratase activity is the Asp-1146. The disordered stretch occupies residues 1700-1719; it reads YNNNNNNNNNNNNNNNNNNN. Residues 2517–2594 form the Carrier domain; it reads NENNNIGDLL…TTIEIIIKGY (78 aa). Ser-2554 is modified (O-(pantetheine 4'-phosphoryl)serine). Residues 2612–2655 are disordered; that stretch reads SVVQKETIKDNNENKDDIKIDMDDKKENLKGKKENIDDKKENNN. Residues 2617-2655 are compositionally biased toward basic and acidic residues; that stretch reads ETIKDNNENKDDIKIDMDDKKENLKGKKENIDDKKENNN. Residues 2618-2655 are a coiled coil; that stretch reads TIKDNNENKDDIKIDMDDKKENLKGKKENIDDKKENNN.

It depends on pantetheine 4'-phosphate as a cofactor.

Probable polyketide synthase. The polypeptide is Probable polyketide synthase 42 (pks42) (Dictyostelium discoideum (Social amoeba)).